The primary structure comprises 260 residues: Indole-3-glycerol phosphate synthase (260 aa).

The protein belongs to the TrpC family.

It carries out the reaction 1-(2-carboxyphenylamino)-1-deoxy-D-ribulose 5-phosphate + H(+) = (1S,2R)-1-C-(indol-3-yl)glycerol 3-phosphate + CO2 + H2O. The protein operates within amino-acid biosynthesis; L-tryptophan biosynthesis; L-tryptophan from chorismate: step 4/5. The chain is Indole-3-glycerol phosphate synthase from Lactiplantibacillus plantarum (strain ATCC BAA-793 / NCIMB 8826 / WCFS1) (Lactobacillus plantarum).